The following is a 156-amino-acid chain: Small ribosomal subunit protein uS7 (156 aa).

Belongs to the universal ribosomal protein uS7 family. As to quaternary structure, part of the 30S ribosomal subunit. Contacts proteins S9 and S11.

Functionally, one of the primary rRNA binding proteins, it binds directly to 16S rRNA where it nucleates assembly of the head domain of the 30S subunit. Is located at the subunit interface close to the decoding center, probably blocks exit of the E-site tRNA. This Geobacter sp. (strain M21) protein is Small ribosomal subunit protein uS7.